A 292-amino-acid polypeptide reads, in one-letter code: MRNTSKEVQSTSYRYAPCDWYYHLPVKRSEKPVGAPPASQIPGLSDLRDSPSVNLPRARRYWIKETDSEYVKLAKQGGRPDLLKHFAPGTRQGSPVAYSLPDWYIHHSKPPTSLQREVPAVSIPEYMVYEEFNPDQANGSYESRQGPFDFDRKTIWQREAEELENVKRKVKLPAINSKNSSKAGTPVNNKDSDKSRLSLPPMPGPKTGSPTNFSKLISNGYKDEWLQQQKADSDRRTPKTSEASVSTQSTEDSKSKSSQDTETPQNSETPEGSEKTPDAEAPPSEATPEELK.

2 disordered regions span residues 29-50 (SEKP…LRDS) and 166-292 (VKRK…EELK). Position 50 is a phosphoserine (Ser50). 2 stretches are compositionally biased toward polar residues: residues 176 to 189 (NSKN…PVNN) and 208 to 217 (GSPTNFSKLI). A compositionally biased stretch (basic and acidic residues) spans 221 to 239 (YKDEWLQQQKADSDRRTPK). 2 stretches are compositionally biased toward polar residues: residues 240–250 (TSEASVSTQST) and 260–270 (DTETPQNSETP).

In terms of processing, phosphorylated upon DNA damage.

This is an uncharacterized protein from Rattus norvegicus (Rat).